We begin with the raw amino-acid sequence, 353 residues long: Photosystem II protein D1 (353 aa).

N-acetylthreonine is present on Thr2. Thr2 carries the post-translational modification Phosphothreonine. The next 3 helical transmembrane spans lie at 29-46, 118-133, and 142-156; these read YIGWFGVLMIPTLLTATS, HFLLGVACYMGREWEL, and WIAVAYSAPVAAATA. His118 lines the chlorophyll a pocket. Tyr126 contacts pheophytin a. 2 residues coordinate [CaMn4O5] cluster: Asp170 and Glu189. Residues 197–218 form a helical membrane-spanning segment; sequence FHMLGVAGVFGGSLFSAMHGSL. His198 lines the chlorophyll a pocket. Residues His215 and 264 to 265 each bind a quinone; that span reads SF. His215 lines the Fe cation pocket. His272 serves as a coordination point for Fe cation. The chain crosses the membrane as a helical span at residues 274–288; that stretch reads FLAAWPVVGIWFTAL. [CaMn4O5] cluster contacts are provided by His332, Glu333, Asp342, and Ala344. A propeptide spanning residues 345 to 353 is cleaved from the precursor; that stretch reads AVEAPSTIG.

This sequence belongs to the reaction center PufL/M/PsbA/D family. As to quaternary structure, PSII is composed of 1 copy each of membrane proteins PsbA, PsbB, PsbC, PsbD, PsbE, PsbF, PsbH, PsbI, PsbJ, PsbK, PsbL, PsbM, PsbT, PsbX, PsbY, PsbZ, Psb30/Ycf12, at least 3 peripheral proteins of the oxygen-evolving complex and a large number of cofactors. It forms dimeric complexes. Requires The D1/D2 heterodimer binds P680, chlorophylls that are the primary electron donor of PSII, and subsequent electron acceptors. It shares a non-heme iron and each subunit binds pheophytin, quinone, additional chlorophylls, carotenoids and lipids. D1 provides most of the ligands for the Mn4-Ca-O5 cluster of the oxygen-evolving complex (OEC). There is also a Cl(-1) ion associated with D1 and D2, which is required for oxygen evolution. The PSII complex binds additional chlorophylls, carotenoids and specific lipids. as cofactor. Post-translationally, tyr-161 forms a radical intermediate that is referred to as redox-active TyrZ, YZ or Y-Z. In terms of processing, C-terminally processed by CTPA; processing is essential to allow assembly of the oxygen-evolving complex and thus photosynthetic growth.

Its subcellular location is the plastid. It is found in the chloroplast thylakoid membrane. It catalyses the reaction 2 a plastoquinone + 4 hnu + 2 H2O = 2 a plastoquinol + O2. In terms of biological role, photosystem II (PSII) is a light-driven water:plastoquinone oxidoreductase that uses light energy to abstract electrons from H(2)O, generating O(2) and a proton gradient subsequently used for ATP formation. It consists of a core antenna complex that captures photons, and an electron transfer chain that converts photonic excitation into a charge separation. The D1/D2 (PsbA/PsbD) reaction center heterodimer binds P680, the primary electron donor of PSII as well as several subsequent electron acceptors. The sequence is that of Photosystem II protein D1 from Lemna minor (Common duckweed).